The chain runs to 234 residues: Purine nucleoside phosphorylase DeoD-type (234 aa).

Histidine 4 contributes to the a purine D-ribonucleoside binding site. Phosphate contacts are provided by residues glycine 20, arginine 24, arginine 43, and 87-90 (RIGT). A purine D-ribonucleoside-binding positions include 179 to 181 (EME) and 203 to 204 (SD). Residue aspartate 204 is the Proton donor of the active site.

The protein belongs to the PNP/UDP phosphorylase family. In terms of assembly, homohexamer; trimer of homodimers.

The catalysed reaction is a purine D-ribonucleoside + phosphate = a purine nucleobase + alpha-D-ribose 1-phosphate. It carries out the reaction a purine 2'-deoxy-D-ribonucleoside + phosphate = a purine nucleobase + 2-deoxy-alpha-D-ribose 1-phosphate. Functionally, catalyzes the reversible phosphorolytic breakdown of the N-glycosidic bond in the beta-(deoxy)ribonucleoside molecules, with the formation of the corresponding free purine bases and pentose-1-phosphate. The chain is Purine nucleoside phosphorylase DeoD-type from Helicobacter pylori (strain Shi470).